A 412-amino-acid chain; its full sequence is Serine hydroxymethyltransferase (412 aa).

(6S)-5,6,7,8-tetrahydrofolate contacts are provided by residues leucine 112 and 116-118 (GHL). Residue lysine 221 is modified to N6-(pyridoxal phosphate)lysine. Glutamate 237 provides a ligand contact to (6S)-5,6,7,8-tetrahydrofolate.

Belongs to the SHMT family. In terms of assembly, homodimer. The cofactor is pyridoxal 5'-phosphate.

It localises to the cytoplasm. The catalysed reaction is (6R)-5,10-methylene-5,6,7,8-tetrahydrofolate + glycine + H2O = (6S)-5,6,7,8-tetrahydrofolate + L-serine. Its pathway is one-carbon metabolism; tetrahydrofolate interconversion. The protein operates within amino-acid biosynthesis; glycine biosynthesis; glycine from L-serine: step 1/1. Functionally, catalyzes the reversible interconversion of serine and glycine with tetrahydrofolate (THF) serving as the one-carbon carrier. This reaction serves as the major source of one-carbon groups required for the biosynthesis of purines, thymidylate, methionine, and other important biomolecules. Also exhibits THF-independent aldolase activity toward beta-hydroxyamino acids, producing glycine and aldehydes, via a retro-aldol mechanism. The sequence is that of Serine hydroxymethyltransferase from Malacoplasma penetrans (strain HF-2) (Mycoplasma penetrans).